A 138-amino-acid chain; its full sequence is Pleckstrin homology-like domain family A member 2 (138 aa).

In terms of domain architecture, PH spans 11–105 (VLKEGELEKR…WNAVITMALI (95 aa)). Residues 117 to 138 (KTRQDDESGSPGQHESRMARAP) form a disordered region.

The protein belongs to the PHLDA2 family.

The protein resides in the cytoplasm. It localises to the membrane. Its function is as follows. Plays a role in regulating placenta growth. May act via its PH domain that competes with other PH domain-containing proteins, thereby preventing their binding to membrane lipids. The chain is Pleckstrin homology-like domain family A member 2 (phlda2) from Salmo salar (Atlantic salmon).